A 304-amino-acid chain; its full sequence is Non-specific ribonucleoside hydrolase RihC (304 aa).

His233 is a catalytic residue.

The protein belongs to the IUNH family. RihC subfamily.

Functionally, hydrolyzes both purine and pyrimidine ribonucleosides with a broad-substrate specificity. The protein is Non-specific ribonucleoside hydrolase RihC of Escherichia coli O6:H1 (strain CFT073 / ATCC 700928 / UPEC).